A 455-amino-acid chain; its full sequence is MKQTLFDKIWNTHVVAGEPGEAQLIYVDLHLIHEVTSPQPFDGLRSTKRQLRRPDLTFATMDHNVPTKDIFNIEDQMSRLQMDTLVKNAQEFGVPLASIGDDKQGIVHVVGPERGLTQPGKVIVCGDSHTATHGAFGAIAFGIGTSEVEHVMATQTIWQVKPKTMGIKVTGEMPKNTYAKDIIMAIIAEHGVSFGTGYAIEFYGETIEALSMAARMTLCNMSIEAGSKTGMVKPDQTTFDYIAGREFAPKKFDSAKAYWSQFYTDDETAFDEIITFDVSHLKPMVTWGTNPGMATAVDQILPEIRDDNDRAAYDYIGLEPGIPVTDIPLDYIFIGSCTNSRYEDLAIAAAMMKGQHLAPNITAWIVPGSRAIRNRAIATSIAKIFEAAGCEWREPGCSACLAMNPDKIPAGKHVASTSNRNFIGRQGAGSRTHLASPAMVAAAGIAGHFVDITEI.

Residues Cys-337, Cys-397, and Cys-400 each coordinate [4Fe-4S] cluster.

Belongs to the aconitase/IPM isomerase family. LeuC type 1 subfamily. In terms of assembly, heterodimer of LeuC and LeuD. The cofactor is [4Fe-4S] cluster.

The catalysed reaction is (2R,3S)-3-isopropylmalate = (2S)-2-isopropylmalate. It functions in the pathway amino-acid biosynthesis; L-leucine biosynthesis; L-leucine from 3-methyl-2-oxobutanoate: step 2/4. Functionally, catalyzes the isomerization between 2-isopropylmalate and 3-isopropylmalate, via the formation of 2-isopropylmaleate. The sequence is that of 3-isopropylmalate dehydratase large subunit from Leuconostoc citreum (strain KM20).